The primary structure comprises 169 residues: PTS system glucose-specific EIIA component (169 aa).

The PTS EIIA type-1 domain maps to 39-143 (DVVFAEKIVG…STLTPVVISN (105 aa)). Zn(2+) is bound by residues H76 and H91. The active-site Tele-phosphohistidine intermediate; for EIIA activity is the H91. H91 bears the Phosphohistidine; by HPr mark.

As to quaternary structure, heterodimer with glycerol kinase (glpk). Requires Zn(2+) as cofactor.

Its subcellular location is the cytoplasm. Functionally, the phosphoenolpyruvate-dependent sugar phosphotransferase system (sugar PTS), a major carbohydrate active transport system, catalyzes the phosphorylation of incoming sugar substrates concomitantly with their translocation across the cell membrane. The enzyme II complex composed of PtsG and Crr is involved in glucose transport. This is PTS system glucose-specific EIIA component (crr) from Escherichia coli O6:H1 (strain CFT073 / ATCC 700928 / UPEC).